The sequence spans 720 residues: Armadillo repeat-containing protein 8 (720 aa).

ARM repeat units follow at residues 51-92, 95-134, 138-176, 178-217, 224-265, 269-309, 313-352, 421-460, 463-502, 505-544, 548-587, 590-632, 635-674, and 681-720; these read NKQK…SLSM, ENNVKSLLDCNIIPALLQGLLSSDLQFIEACLRCLRTVFT, TPVELLYTDASVIPHLMLLLSRSIYAQEYICQIYAHCCK, PDHQTILFNHGVVQNIAHLLTSVSYKVRMQALKCFSVLAF, MTLA…YMCR, IRTD…YLIE, ELQRIASITDHLISMLADYFKYPSSVSAITDIKRHQETGQ, DIRKKIIEAEHMMDRIVNGLSETSVKVRLAAVRCLHSLSR, QQLRTSFQDHAVWKPLMKVLQNAPDDILVVASSTLCNLLL, SPSKEPILESGAVELLCSLTLSENPALRVNGIWALMNMAF, QKIKSDILRGLSTEQLFQLLSDSDVNVLMKTLGLLRNLLS, PHID…NIAD, TAKDLIMTNDDILQKIKYYVGHSNLKLQLAAMFCIANLTW, and QERQDKLREIGIVDILHKLSQSTDPNLCDKAKTALQQYFA.

In terms of assembly, identified in the CTLH complex that contains at least MAEA, RMND5A (or alternatively its paralog RMND5B), GID8, WDR26, and RANBP9 and/or RANBP10; ARMC8 has an ancillary role in the complex.

It is found in the nucleus. The protein localises to the cytoplasm. In terms of biological role, component of the CTLH E3 ubiquitin-protein ligase complex that mediates ubiquitination and subsequent proteasomal degradation of target proteins. In Xenopus laevis (African clawed frog), this protein is Armadillo repeat-containing protein 8 (armc8).